The sequence spans 200 residues: Probable nicotinate-nucleotide adenylyltransferase (200 aa).

The protein belongs to the NadD family.

It carries out the reaction nicotinate beta-D-ribonucleotide + ATP + H(+) = deamido-NAD(+) + diphosphate. It participates in cofactor biosynthesis; NAD(+) biosynthesis; deamido-NAD(+) from nicotinate D-ribonucleotide: step 1/1. Functionally, catalyzes the reversible adenylation of nicotinate mononucleotide (NaMN) to nicotinic acid adenine dinucleotide (NaAD). The chain is Probable nicotinate-nucleotide adenylyltransferase from Clavibacter michiganensis subsp. michiganensis (strain NCPPB 382).